A 188-amino-acid chain; its full sequence is MIAFVGLGNPGKEYEKTRHNVGFMTIDELSKKWDIPLNQSKFHGQFGTGFVSGQKVLLVKPLTYMNLSGECVRPLMDYYDIPLEHLKVIYDDLDLPTGRIRLRTKGSAGGHNGIKSLIQHLGSPEFDRFRIGIGRPQNGMKVVDYVLGRFSEEEQPDIASAIQASVEACEAALTKPFLEVMNDFNKKV.

Position 14 (Y14) interacts with tRNA. H19 acts as the Proton acceptor in catalysis. 3 residues coordinate tRNA: Y64, N66, and N112.

This sequence belongs to the PTH family. As to quaternary structure, monomer.

Its subcellular location is the cytoplasm. The enzyme catalyses an N-acyl-L-alpha-aminoacyl-tRNA + H2O = an N-acyl-L-amino acid + a tRNA + H(+). Hydrolyzes ribosome-free peptidyl-tRNAs (with 1 or more amino acids incorporated), which drop off the ribosome during protein synthesis, or as a result of ribosome stalling. Functionally, catalyzes the release of premature peptidyl moieties from peptidyl-tRNA molecules trapped in stalled 50S ribosomal subunits, and thus maintains levels of free tRNAs and 50S ribosomes. This is Peptidyl-tRNA hydrolase from Bacillus pumilus (strain SAFR-032).